Consider the following 222-residue polypeptide: Peptide methionine sulfoxide reductase MsrA (222 aa).

Cysteine 55 is a catalytic residue.

Belongs to the MsrA Met sulfoxide reductase family.

It catalyses the reaction L-methionyl-[protein] + [thioredoxin]-disulfide + H2O = L-methionyl-(S)-S-oxide-[protein] + [thioredoxin]-dithiol. The catalysed reaction is [thioredoxin]-disulfide + L-methionine + H2O = L-methionine (S)-S-oxide + [thioredoxin]-dithiol. Its function is as follows. Has an important function as a repair enzyme for proteins that have been inactivated by oxidation. Catalyzes the reversible oxidation-reduction of methionine sulfoxide in proteins to methionine. In Streptomyces griseus subsp. griseus (strain JCM 4626 / CBS 651.72 / NBRC 13350 / KCC S-0626 / ISP 5235), this protein is Peptide methionine sulfoxide reductase MsrA.